We begin with the raw amino-acid sequence, 530 residues long: Seeligeriolysin (530 aa).

The N-terminal stretch at 1–25 (MKIFGLVIMSLLFVSLPITQQPEAR) is a signal peptide. The interval 36–55 (TISPAETPESPPATPKTPVE) is disordered. 4 beta stranded membrane passes run 215–228 (ESQLIAKFGTAFKA), 235–244 (VNFEAISDGK), 313–322 (SNKVKTAFEA), and 330–342 (KGDVELTNIIKNS). Residues 484 to 494 (ECTGLFWEWWR) carry the Conserved undecapeptide motif. The Cholesterol binding signature appears at 516–517 (TL).

This sequence belongs to the cholesterol-dependent cytolysin family. As to quaternary structure, homooligomeric pore complex of 35 to 50 subunits; when inserted in the host membrane.

It is found in the secreted. Its subcellular location is the host cell membrane. In terms of biological role, a cholesterol-dependent toxin that causes cytolysis by forming pores in cholesterol containing host membranes. L.seeligeri is non-pathogenic, perhaps in part because this protein is about 25% as toxic as listeriolysin O. Mutating a single residue in the undecapeptide increases toxicity 2-fold. After binding to target membranes, the protein undergoes a major conformation change, leading to its insertion in the host membrane and formation of an oligomeric pore complex. Cholesterol is required for binding to host membranes, membrane insertion and pore formation; cholesterol binding is mediated by a Thr-Leu pair in the C-terminus. Can be reversibly inactivated by oxidation. In Listeria seeligeri, this protein is Seeligeriolysin.